Here is a 462-residue protein sequence, read N- to C-terminus: Chromosomal replication initiator protein DnaA (462 aa).

The tract at residues 1–84 is domain I, interacts with DnaA modulators; that stretch reads MAVSLWQQCI…RFDIGSRPSA (84 aa). The tract at residues 84 to 125 is domain II; the sequence is APKPIQATAAVVKPKLESSPQKSQTSFNVNAPEPAATANHRS. The tract at residues 126–342 is domain III, AAA+ region; the sequence is NINPTYQFEN…GALNRVIANA (217 aa). The ATP site is built by Gly170, Gly172, Lys173, and Thr174. Residues 343–462 form a domain IV, binds dsDNA region; sequence NFTGRPITID…YANLIRTLSS (120 aa).

Belongs to the DnaA family. Oligomerizes as a right-handed, spiral filament on DNA at oriC.

It localises to the cytoplasm. Plays an essential role in the initiation and regulation of chromosomal replication. ATP-DnaA binds to the origin of replication (oriC) to initiate formation of the DNA replication initiation complex once per cell cycle. Binds the DnaA box (a 9 base pair repeat at the origin) and separates the double-stranded (ds)DNA. Forms a right-handed helical filament on oriC DNA; dsDNA binds to the exterior of the filament while single-stranded (ss)DNA is stabiized in the filament's interior. The ATP-DnaA-oriC complex binds and stabilizes one strand of the AT-rich DNA unwinding element (DUE), permitting loading of DNA polymerase. After initiation quickly degrades to an ADP-DnaA complex that is not apt for DNA replication. Binds acidic phospholipids. This chain is Chromosomal replication initiator protein DnaA, found in Shewanella woodyi (strain ATCC 51908 / MS32).